Reading from the N-terminus, the 201-residue chain is MENQVSSFLIDSPMEWKTYMKSLSDDNPSFGDVTVNLTKISVSSKNAKSYAEEMYNYVTQEMVFISERSRLLLRAKRRLYKNQSLMKKTSVSTSNTVKMVFMSLAKQIEQMLKFCMMVYSKLCEAFETTLKVAKEFQICDSSQEWFFQFQLGYHRKQMELQMLSFVAEWLVLTQHYTDALNDSAKTLYDIMESSHKAAQKV.

It localises to the nucleus. Required for correct meiotic chromosome segregation and recombination. This is Twin horsetail protein 2 (tht2) from Schizosaccharomyces pombe (strain 972 / ATCC 24843) (Fission yeast).